A 237-amino-acid chain; its full sequence is Ras-related protein RABA3 (237 aa).

35–42 (GDSAVGKT) is a binding site for GTP. Positions 57 to 65 (SKSTIGVEF) match the Effector region motif. GTP-binding positions include 83 to 87 (DTAGQ), 141 to 144 (NKAD), and 172 to 173 (SA). S-geranylgeranyl cysteine attachment occurs at residues cysteine 235 and cysteine 237. Cysteine 237 carries the post-translational modification Cysteine methyl ester.

It belongs to the small GTPase superfamily. Rab family. In terms of tissue distribution, expressed in root tips.

It is found in the endosome membrane. Its subcellular location is the golgi apparatus. It localises to the trans-Golgi network membrane. Its function is as follows. Intracellular vesicle trafficking and protein transport. The polypeptide is Ras-related protein RABA3 (RABA3) (Arabidopsis thaliana (Mouse-ear cress)).